The chain runs to 199 residues: LPICPSGSVNCQVSLGELFDRAVKLSHYIHFLSSEMFNEFDERYAQGRGFITKAVNGCHNASLTTPEDKEQAQQIHHEDLLNLVLGVLRSWNDPLLHLVTEVQRIKEAPDTILWKAVEIEEQNKRLLEGMEKIVGRVQPGDTGNEVYSRWSGLPSLQLADEDSRLFAFYNLLHCGRRDSHKIDNYLKLLKCRLIHDSNC.

3 cysteine pairs are disulfide-bonded: cysteine 4-cysteine 11, cysteine 58-cysteine 174, and cysteine 191-cysteine 199. A glycan (N-linked (GlcNAc...) asparagine) is linked at asparagine 60.

It belongs to the somatotropin/prolactin family. Glycosylated.

Its subcellular location is the secreted. The polypeptide is Prolactin-1 (Alligator mississippiensis (American alligator)).